A 210-amino-acid polypeptide reads, in one-letter code: Outer-membrane lipoprotein LolB (210 aa).

The N-terminal stretch at 1–29 is a signal peptide; the sequence is MSLISNNEERSLRVRYCIAIALSALLISG. Cys-30 is lipidated: N-palmitoyl cysteine. Cys-30 is lipidated: S-diacylglycerol cysteine.

Belongs to the LolB family. As to quaternary structure, monomer.

Its subcellular location is the cell outer membrane. Its function is as follows. Plays a critical role in the incorporation of lipoproteins in the outer membrane after they are released by the LolA protein. The chain is Outer-membrane lipoprotein LolB from Coxiella burnetii (strain CbuK_Q154) (Coxiella burnetii (strain Q154)).